Here is a 402-residue protein sequence, read N- to C-terminus: Probable 2,3-bisphosphoglycerate-independent phosphoglycerate mutase (402 aa).

This sequence belongs to the BPG-independent phosphoglycerate mutase family. A-PGAM subfamily.

The enzyme catalyses (2R)-2-phosphoglycerate = (2R)-3-phosphoglycerate. The protein operates within carbohydrate degradation; glycolysis; pyruvate from D-glyceraldehyde 3-phosphate: step 3/5. Its function is as follows. Catalyzes the interconversion of 2-phosphoglycerate and 3-phosphoglycerate. The chain is Probable 2,3-bisphosphoglycerate-independent phosphoglycerate mutase from Thermosipho melanesiensis (strain DSM 12029 / CIP 104789 / BI429).